The following is a 317-amino-acid chain: L-lactate dehydrogenase (317 aa).

3 residues coordinate NAD(+): V16, D37, and Y68. Substrate contacts are provided by residues Q85, R91, 123–126 (NPCD), and 151–154 (DSAR). Position 121–123 (121–123 (ASN)) interacts with NAD(+). The active-site Proton acceptor is the H178. Y222 bears the Phosphotyrosine mark. Substrate is bound at residue T231.

The protein belongs to the LDH/MDH superfamily. LDH family. In terms of assembly, homotetramer.

It localises to the cytoplasm. It carries out the reaction (S)-lactate + NAD(+) = pyruvate + NADH + H(+). Its pathway is fermentation; pyruvate fermentation to lactate; (S)-lactate from pyruvate: step 1/1. Catalyzes the conversion of lactate to pyruvate. This is L-lactate dehydrogenase from Mesoplasma florum (strain ATCC 33453 / NBRC 100688 / NCTC 11704 / L1) (Acholeplasma florum).